The chain runs to 380 residues: MTIIRKKHPLIKIINHSFIDLPAPSNISSWWNFGSLLGLCLIIQILTGLFLAMHYTSDTATAFSSVTHICRDVNYGWLIRYMHANGASMFFICLFLHVGRGIYYGSYNMIETWNMGIVLLFAVMATAFMGYVLPWGQMSFWGATVITNLLSAIPYIGTTLVEWIWGGFSVDKATLTRFFAFHFILPFIITALVLVHLLFLHETGSNNPTGLNSDADKIPFHPYYTIKDFLGVLILLMAFMILTLFFPDILGDPDNYTPANPLNTPPHIKPEWYFLFAYAILRSIPNKLGGVLALILSIVILAFMPLLHTSKQRALTFRPITQTMYWILVADLLVLTWIGGQPVEYPFIIIGQTASIAYFAIIVILMPMAGMFENNIMDLD.

A run of 4 helical transmembrane segments spans residues F33–M53, W77–V98, W113–L133, and F178–L198. Residues H83 and H97 each coordinate heme b. Heme b contacts are provided by H182 and H196. An a ubiquinone-binding site is contributed by H201. Helical transmembrane passes span I226 to F246, L288 to H308, I320 to G340, and F347 to P367.

The protein belongs to the cytochrome b family. As to quaternary structure, the cytochrome bc1 complex contains 11 subunits: 3 respiratory subunits (MT-CYB, CYC1 and UQCRFS1), 2 core proteins (UQCRC1 and UQCRC2) and 6 low-molecular weight proteins (UQCRH/QCR6, UQCRB/QCR7, UQCRQ/QCR8, UQCR10/QCR9, UQCR11/QCR10 and a cleavage product of UQCRFS1). This cytochrome bc1 complex then forms a dimer. Heme b serves as cofactor.

It localises to the mitochondrion inner membrane. Its function is as follows. Component of the ubiquinol-cytochrome c reductase complex (complex III or cytochrome b-c1 complex) that is part of the mitochondrial respiratory chain. The b-c1 complex mediates electron transfer from ubiquinol to cytochrome c. Contributes to the generation of a proton gradient across the mitochondrial membrane that is then used for ATP synthesis. The polypeptide is Cytochrome b (MT-CYB) (Microtus guentheri (Gunther's vole)).